The sequence spans 156 residues: Transcription elongation factor GreA (156 aa).

A coiled-coil region spans residues 1 to 32 (MKKVRLTREGYEKLKKELEDLKRKFMYEISER).

The protein belongs to the GreA/GreB family.

Its function is as follows. Necessary for efficient RNA polymerase transcription elongation past template-encoded arresting sites. The arresting sites in DNA have the property of trapping a certain fraction of elongating RNA polymerases that pass through, resulting in locked ternary complexes. Cleavage of the nascent transcript by cleavage factors such as GreA or GreB allows the resumption of elongation from the new 3'terminus. GreA releases sequences of 2 to 3 nucleotides. This Thermotoga maritima (strain ATCC 43589 / DSM 3109 / JCM 10099 / NBRC 100826 / MSB8) protein is Transcription elongation factor GreA.